We begin with the raw amino-acid sequence, 134 residues long: UPF0412 protein YaaI (134 aa).

The N-terminal stretch at 1–23 is a signal peptide; it reads MRSVLTISASLLFGLALSSVAHA.

This sequence belongs to the UPF0412 family.

This Salmonella paratyphi B (strain ATCC BAA-1250 / SPB7) protein is UPF0412 protein YaaI.